We begin with the raw amino-acid sequence, 261 residues long: Matrix metalloproteinase-26 (261 aa).

An N-terminal signal peptide occupies residues 1–17; it reads MQLVILRVTIFLPWCFA. Residues 18 to 89 constitute a propeptide that is removed on maturation; that stretch reads VPVPPAADHK…PHCGVPDGSD (72 aa). Asn-64 is a glycosylation site (N-linked (GlcNAc...) asparagine). Positions 80–87 match the Cysteine switch motif; that stretch reads PHCGVPDG. Residues Cys-82 and His-208 each coordinate Zn(2+). Residue Glu-209 is part of the active site. Residues His-212 and His-218 each coordinate Zn(2+). An N-linked (GlcNAc...) asparagine glycan is attached at Asn-221.

This sequence belongs to the peptidase M10A family. The cofactor is Zn(2+). Ca(2+) is required as a cofactor. In terms of tissue distribution, expressed specifically in uterus and placenta. Is also widely expressed in malignant tumors from different sources as well as in diverse tumor cell lines.

It localises to the secreted. It is found in the extracellular space. The protein localises to the extracellular matrix. Functionally, may hydrolyze collagen type IV, fibronectin, fibrinogen, beta-casein, type I gelatin and alpha-1 proteinase inhibitor. Is also able to activate progelatinase B. The protein is Matrix metalloproteinase-26 (MMP26) of Homo sapiens (Human).